The primary structure comprises 472 residues: Aspartyl/glutamyl-tRNA(Asn/Gln) amidotransferase subunit B (472 aa).

The protein belongs to the GatB/GatE family. GatB subfamily. As to quaternary structure, heterotrimer of A, B and C subunits.

It catalyses the reaction L-glutamyl-tRNA(Gln) + L-glutamine + ATP + H2O = L-glutaminyl-tRNA(Gln) + L-glutamate + ADP + phosphate + H(+). It carries out the reaction L-aspartyl-tRNA(Asn) + L-glutamine + ATP + H2O = L-asparaginyl-tRNA(Asn) + L-glutamate + ADP + phosphate + 2 H(+). Its function is as follows. Allows the formation of correctly charged Asn-tRNA(Asn) or Gln-tRNA(Gln) through the transamidation of misacylated Asp-tRNA(Asn) or Glu-tRNA(Gln) in organisms which lack either or both of asparaginyl-tRNA or glutaminyl-tRNA synthetases. The reaction takes place in the presence of glutamine and ATP through an activated phospho-Asp-tRNA(Asn) or phospho-Glu-tRNA(Gln). The protein is Aspartyl/glutamyl-tRNA(Asn/Gln) amidotransferase subunit B of Campylobacter jejuni subsp. jejuni serotype O:6 (strain 81116 / NCTC 11828).